Consider the following 144-residue polypeptide: MRLNSLSPAEGAKHSAKRLGRGIGSGLGKTGGRGHKGQKSRTGGGVRRGFEGGQMPLYRRLPKFGFTSLKALHVAEIRLSDLAKVDGNVVTLDALKAANVITKDILSAKVILSGKVEKAVVVKGLGVTKGAKAAIEAAGGSIEE.

Residues 1–53 (MRLNSLSPAEGAKHSAKRLGRGIGSGLGKTGGRGHKGQKSRTGGGVRRGFEGG) are disordered. Residues 21-31 (RGIGSGLGKTG) show a composition bias toward gly residues.

It belongs to the universal ribosomal protein uL15 family. Part of the 50S ribosomal subunit.

Its function is as follows. Binds to the 23S rRNA. This is Large ribosomal subunit protein uL15 from Glaesserella parasuis serovar 5 (strain SH0165) (Haemophilus parasuis).